Reading from the N-terminus, the 549-residue chain is MLASIPHMETLRSLPRNPDVVARHPSAEDLDAAQQLISSAQAGREHPQDRHYTDNGSRKSEAGAPHSHHEGEYPIVQTSETPMNGHHVEKTSPKSQKDTSFLGHSCSNCGTKSTPLWRRSPTGAMICNACGLYLKARNVARPTKRNRTQASPEAYHPQNQSVGSQPDPAVTGSEGCTGSCPGGGNCNGTGGAEGCDGCPAYNNRVYKSTARGNVAAHALNRAGNSDAVPSPEAEAPARNSGQPEGNMLVACQNCGTTVTPLWRRDENGHPICNACGLYYKLHGSYRPTTMKKTIIKRRKRVVPALRENSPTAATHSSHGSSASPEASSPATLAYSHDERHRYYSSEPVDQYHRISPAAQRPFGFAPPPVDFTNFNSGAVTLPHHPPPPRLLEPGHPPLSQFARRSISPSSSGNSKKRTLAEAGANTDTGPVPTTLEAGSNQLPPIVSSANPPPPARLSSISSILNHAHARDESRLDPSLAALGRQQQSQPHHPQSSPLAPTQAASQSLPGVSNMDNHVEDRRAKLQREAEEMREQLRAKERELAELAGQ.

The segment at 40–100 is disordered; it reads AQAGREHPQD…TSPKSQKDTS (61 aa). 2 stretches are compositionally biased toward basic and acidic residues: residues 43 to 72 and 86 to 97; these read GREH…HEGE and HHVEKTSPKSQK. The GATA-type 1 zinc-finger motif lies at 106 to 130; that stretch reads CSNCGTKSTPLWRRSPTGAMICNAC. The interval 141–174 is disordered; sequence RPTKRNRTQASPEAYHPQNQSVGSQPDPAVTGSE. The tract at residues 180–198 is cystein-rich region (CRR); the sequence is CPGGGNCNGTGGAEGCDGC. Positions 223–244 are disordered; the sequence is GNSDAVPSPEAEAPARNSGQPE. The segment at 251-275 adopts a GATA-type 2 zinc-finger fold; that stretch reads CQNCGTTVTPLWRRDENGHPICNAC. Disordered stretches follow at residues 306 to 332, 375 to 459, and 482 to 535; these read RENS…PATL, NSGA…RLSS, and LGRQ…MREQ. The span at 309–331 shows a compositional bias: low complexity; the sequence is SPTAATHSSHGSSASPEASSPAT. Residues 383 to 396 are compositionally biased toward pro residues; the sequence is HHPPPPRLLEPGHP. Over residues 485-497 the composition is skewed to low complexity; the sequence is QQQSQPHHPQSSP. The span at 498 to 515 shows a compositional bias: polar residues; sequence LAPTQAASQSLPGVSNMD. A coiled-coil region spans residues 511–549; that stretch reads VSNMDNHVEDRRAKLQREAEEMREQLRAKERELAELAGQ. The span at 516–535 shows a compositional bias: basic and acidic residues; sequence NHVEDRRAKLQREAEEMREQ.

The protein localises to the nucleus. GATA-type transcription repressor that regulates iron- acquisition genes through specific binding GATA sequence elements of target promoters. Iron acquisition regulation is critical for survival under both iron-limiting conditions (to acquire essential iron) and iron-replete conditions (to limit iron toxicity). SreA targets include genes encoding a number of key iron-regulated factors such as those involved in siderophore biosynthesis. The polypeptide is GATA-type transcription factor sreA (Emericella nidulans (strain FGSC A4 / ATCC 38163 / CBS 112.46 / NRRL 194 / M139) (Aspergillus nidulans)).